Reading from the N-terminus, the 302-residue chain is F-box protein SKIP19 (302 aa).

Positions 16-63 (STNWTELPPELTSAILHRLGAIEILENAQKVCRSWRRVCKDPSMWRKI) constitute an F-box domain.

As to quaternary structure, part of a SCF (ASK-cullin-F-box) protein ligase complex. Interacts with CUL1 and SPK1B/ASK2.

The protein resides in the nucleus. It functions in the pathway protein modification; protein ubiquitination. Functionally, component of SCF(ASK-cullin-F-box) E3 ubiquitin ligase complexes, which may mediate the ubiquitination and subsequent proteasomal degradation of target proteins. The sequence is that of F-box protein SKIP19 (SKIP19) from Arabidopsis thaliana (Mouse-ear cress).